A 514-amino-acid polypeptide reads, in one-letter code: Exoglucanase 1 (514 aa).

Residues 1-17 form the signal peptide; that stretch reads MYRKLAVISAFLATARA. At Gln-18 the chain carries Pyrrolidone carboxylic acid. Residues 18–453 form a catalytic region; it reads QSACTLQSET…GSTGNPSGGN (436 aa). Cystine bridges form between Cys-21–Cys-89, Cys-36–Cys-42, Cys-67–Cys-88, Cys-78–Cys-84, Cys-155–Cys-414, Cys-189–Cys-227, Cys-193–Cys-226, Cys-247–Cys-273, Cys-255–Cys-260, and Cys-278–Cys-348. N-linked (GlcNAc) asparagine glycosylation is present at Asn-62. The active-site Nucleophile is Glu-229. The active-site Proton donor/acceptor is the Glu-234. The N-linked (GlcNAc...) (high mannose) asparagine glycan is linked to Asn-287. Asn-401 carries N-linked (GlcNAc) asparagine glycosylation. The segment covering 401–437 has biased composition (polar residues); the sequence is NETSSTPGAVRGSCSTSSGVPAQVESQSPNAKVTFSN. Positions 401–481 are disordered; that stretch reads NETSSTPGAV…TGSSPGPTQS (81 aa). The linker stretch occupies residues 454–478; sequence PPGGNPPGTTTTRRPATTTGSSPGP. The span at 460–479 shows a compositional bias: low complexity; that stretch reads PGTTTTRRPATTTGSSPGPT. O-linked (Man) threonine glycosylation is present at Thr-462. O-linked (Man...) threonine glycans are attached at residues Thr-463, Thr-464, and Thr-465. O-linked (Man) threonine glycosylation is present at Thr-470. Thr-471 and Thr-472 each carry an O-linked (Man...) threonine glycan. O-linked (Man) serine glycosylation is found at Ser-474 and Ser-475. A CBM1 domain is found at 478–514; the sequence is PTQSHYGQCGGIGYSGPTVCASGTTCQVLNPYYSQCL. O-linked (Man) threonine glycosylation occurs at Thr-479. O-linked (Man) serine glycans are attached at residues Ser-481 and Ser-492. Cystine bridges form between Cys-486-Cys-503 and Cys-497-Cys-513.

The protein belongs to the glycosyl hydrolase 7 (cellulase C) family. Post-translationally, N-glycosylated. A high mannose glycan is attached to Asn-287 (predominantly Man(8)GlcNAc(2)) and single GlcNAc occupancy is observed at Asn-62 and Asn-401 with some site heterogeneity depending on strains and fermentation conditions. O-glycosylated. Within the linker domain, all 8 threonines are variably glycosylated with between at least one, and up to three, mannose residues per site. All serines in this domain are at least partially glycosylated with a single mannose residue. O-glycosylation of the cellulase linker provides protection from proteolysis. Linker glycans also contribute to binding affinity of cellobiohydrolases to cellulose.

The protein localises to the secreted. The enzyme catalyses Hydrolysis of (1-&gt;4)-beta-D-glucosidic linkages in cellulose and cellotetraose, releasing cellobiose from the non-reducing ends of the chains.. Exocellobiohydrolases (CBH) that catalyzes the hydrolysis of 1,4-beta-D-glucosidic bonds in cellulose to release the disaccharide cellobiose. The degradation of cellulose involves an interplay between different cellulolytic enzymes. Hydrolysis starts with endoglucanases (EGs), which cut internal beta-1,4-glucosidic bonds in cellulose to reduce the polymerization degree of the substrate and create new chain ends for exocellobiohydrolases (CBHs). The CBHs release the disaccharide cellobiose from the non-reducing end of the cellulose polymer chain. Finally, beta-1,4-glucosidases hydrolyze the cellobiose and other short cello-oligosaccharides into glucose units. The chain is Exoglucanase 1 (cbh1) from Hypocrea jecorina (strain ATCC 56765 / BCRC 32924 / NRRL 11460 / Rut C-30) (Trichoderma reesei).